Reading from the N-terminus, the 164-residue chain is Protein phosphatase 1 regulatory subunit 14C (164 aa).

Residues 1–19 show a composition bias toward gly residues; sequence MSVVTGGGEAAGGTSGGGA. The tract at residues 1–72 is disordered; that stretch reads MSVVTGGGEA…QRRHQQGKVT (72 aa). An N-acetylserine modification is found at S2. Phosphoserine is present on S25. Omega-N-methylarginine is present on R27. S33 carries the phosphoserine modification. Positions 50-62 are enriched in low complexity; it reads VATVAAAGQVQQQ. A Phosphothreonine; by ILK1 modification is found at T72.

It belongs to the PP1 inhibitor family. In terms of processing, has over 600-fold higher inhibitory activity when phosphorylated, creating a molecular switch for regulating the phosphorylation status of PPP1CA substrates and smooth muscle contraction. The main inhibitory site appears to be Thr-72.

It is found in the endomembrane system. Its function is as follows. Inhibitor of the PP1 regulatory subunit PPP1CA. In Rattus norvegicus (Rat), this protein is Protein phosphatase 1 regulatory subunit 14C (Ppp1r14c).